A 398-amino-acid chain; its full sequence is Ras-related GTP-binding protein C (398 aa).

Positions 1-56 (MSLQYGAEETPLAGSYGAADSFPKDFGYGVEEEEEEAAAGGGGGAGAGGGCGPGGA) are disordered. Ser-2 is subject to N-acetylserine. A phosphoserine mark is found at Ser-2 and Ser-15. Residues 39-55 (AGGGGGAGAGGGCGPGG) show a composition bias toward gly residues. Residues Arg-70, Ser-71, Gly-72, Lys-73, Ser-74, and Ser-75 each coordinate GDP. Residue Lys-73 coordinates GTP. Residues Thr-89 and Thr-95 each contribute to the GTP site. Thr-95 carries the phosphothreonine modification. 4 residues coordinate GDP: His-177, Lys-178, Asp-180, and Ile-219. Asp-180 provides a ligand contact to GTP.

Belongs to the GTR/RAG GTP-binding protein family. As to quaternary structure, forms a heterodimer with RRAGA, in a sequence-independent manner, and RRAGB. Heterodimerization stabilizes proteins of the heterodimer. The GDP-bound form of RRAGC (in complex with the GTP-bound form of RRAGA or RRAGB), interacts with RPTOR, thereby promoting recruitment of mTORC1 to the lysosomes. Component of the lysosomal folliculin complex (LFC), composed of FLCN, FNIP1 (or FNIP2), RagA/RRAGA or RagB/RRAGB GDP-bound, RagC/RRAGC or RagD/RRAGD GTP-bound, and Ragulator. Interacts with NOL8. Interacts with SH3BP4; the interaction with this negative regulator is most probably direct, preferentially occurs with the inactive GDP-bound form of RRAGB, is negatively regulated by amino acids and prevents interaction with RPTOR. The Rag heterodimer interacts with SLC38A9; the probable amino acid sensor. Interacts with SESN1, SESN2 and SESN3. Interacts with PIP4P1. The GDP-bound form interacts with TFEB. The GDP-bound form interacts with TFE3. As to expression, expressed most abundantly in kidney. Moderately expressed in brain, ovary, and testis, and detected at lower levels in heart, liver, and muscle. Not detected in lung, spleen, and small intestine. Widely expressed in tumor cells, with expression being specifically up-regulated in highly metastatic cells.

Its subcellular location is the cytoplasm. It localises to the nucleus. The protein resides in the lysosome membrane. The catalysed reaction is GTP + H2O = GDP + phosphate + H(+). Its activity is regulated as follows. The activation of RagC/RRAGC is mediated by a GTPase activating protein (GAP). In high-amino acid conditions, activated by GTPase activating protein FLCN that stimulates RRAGC GTPase activity to turn it into its active GDP-bound form. In response to amino acid depletion, the GATOR1 complex inactivates RagC/RRAGC by securing the GTP-bound inactive form. Its function is as follows. Guanine nucleotide-binding protein that plays a crucial role in the cellular response to amino acid availability through regulation of the mTORC1 signaling cascade. Forms heterodimeric Rag complexes with RagA/RRAGA or RagB/RRAGB and cycles between an inactive GTP-bound and an active GDP-bound form: RagC/RRAGC is in its active form when GDP-bound RagC/RRAGC forms a complex with GTP-bound RagA/RRAGA (or RagB/RRAGB) and in an inactive form when GTP-bound RagC/RRAGC heterodimerizes with GDP-bound RagA/RRAGA (or RagB/RRAGB). In its GDP-bound active form, promotes the recruitment of mTORC1 to the lysosomes and its subsequent activation by the GTPase RHEB. This is a crucial step in the activation of the MTOR signaling cascade by amino acids. Also plays a central role in the non-canonical mTORC1 complex, which acts independently of RHEB and specifically mediates phosphorylation of MiT/TFE factors TFEB and TFE3: GDP-bound RagC/RRAGC mediates recruitment of MiT/TFE factors TFEB and TFE3. This is Ras-related GTP-binding protein C from Mus musculus (Mouse).